A 334-amino-acid polypeptide reads, in one-letter code: Ferrochelatase 1 (334 aa).

Fe cation contacts are provided by His201 and Glu282.

The protein belongs to the ferrochelatase family.

Its subcellular location is the cytoplasm. The catalysed reaction is heme b + 2 H(+) = protoporphyrin IX + Fe(2+). It participates in porphyrin-containing compound metabolism; protoheme biosynthesis; protoheme from protoporphyrin-IX: step 1/1. In terms of biological role, catalyzes the ferrous insertion into protoporphyrin IX. The polypeptide is Ferrochelatase 1 (Shewanella oneidensis (strain ATCC 700550 / JCM 31522 / CIP 106686 / LMG 19005 / NCIMB 14063 / MR-1)).